The sequence spans 1533 residues: DNA topoisomerase 2-alpha (1533 aa).

Methionine 1 is modified (N-acetylmethionine). Residues 1–22 (MEVSPLQPVNENMQVNKTKKNE) are disordered. Position 4 is a phosphoserine (serine 4). Residues 7 to 16 (QPVNENMQVN) are compositionally biased toward polar residues. Residue lysine 17 forms a Glycyl lysine isopeptide (Lys-Gly) (interchain with G-Cter in SUMO2) linkage. Residues asparagine 91, asparagine 120, and 148–150 (SSN) each bind ATP. Residues lysine 156 and lysine 157 each participate in a glycyl lysine isopeptide (Lys-Gly) (interchain with G-Cter in SUMO2) cross-link. Residue 161-168 (GRNGYGAK) coordinates ATP. A Glycyl lysine isopeptide (Lys-Gly) (interchain with G-Cter in SUMO2) cross-link involves residue lysine 261. Threonine 282 is modified (phosphothreonine). Positions 342–344 (KKK) are interaction with DNA. Residue lysine 352 forms a Glycyl lysine isopeptide (Lys-Gly) (interchain with G-Cter in SUMO2) linkage. ATP is bound at residue 376–378 (QTK). Glycyl lysine isopeptide (Lys-Gly) (interchain with G-Cter in SUMO2) cross-links involve residues lysine 386, lysine 397, lysine 416, lysine 418, lysine 425, and lysine 440. The 118-residue stretch at 455–572 (CTLILTEGDS…SLLRHRFLEE (118 aa)) folds into the Toprim domain. Glutamate 461 contacts Mg(2+). Glycyl lysine isopeptide (Lys-Gly) (interchain with G-Cter in SUMO2) cross-links involve residues lysine 466, lysine 480, and lysine 529. Positions 541 and 543 each coordinate Mg(2+). Glycyl lysine isopeptide (Lys-Gly) (interchain with G-Cter in SUMO2) cross-links involve residues lysine 584, lysine 599, lysine 614, lysine 622, lysine 625, lysine 632, lysine 639, lysine 655, lysine 662, and lysine 676. The Topo IIA-type catalytic domain occupies 715–1171 (IPSMVDGLKP…SPSDLWKEDL (457 aa)). Tyrosine 805 (O-(5'-phospho-DNA)-tyrosine intermediate) is an active-site residue. The segment at 990–999 (KLQTSLTCNS) is interaction with DNA. Lysine 1075 participates in a covalent cross-link: Glycyl lysine isopeptide (Lys-Gly) (interchain with G-Cter in SUMO2). Disordered stretches follow at residues 1090–1121 (WKEA…VADS) and 1183–1215 (AKEK…PSPC). The span at 1099–1108 (DEEENEESDN) shows a compositional bias: acidic residues. The residue at position 1106 (serine 1106) is a Phosphoserine; by CK1. Glycyl lysine isopeptide (Lys-Gly) (interchain with G-Cter in SUMO2) cross-links involve residues lysine 1114, lysine 1196, and lysine 1204. At threonine 1205 the chain carries Phosphothreonine. Residue serine 1213 is modified to Phosphoserine. A Glycyl lysine isopeptide (Lys-Gly) (interchain with G-Cter in SUMO2) cross-link involves residue lysine 1228. A disordered region spans residues 1231–1533 (AEKKIKKKIK…LEESDEDDLF (303 aa)). A Glycyl lysine isopeptide (Lys-Gly) (interchain with G-Cter in SUMO1); alternate cross-link involves residue lysine 1240. Residue lysine 1240 forms a Glycyl lysine isopeptide (Lys-Gly) (interchain with G-Cter in SUMO2); alternate linkage. Threonine 1244 carries the phosphothreonine modification. Serine 1247 bears the Phosphoserine mark. Positions 1256–1272 (EGLKQRLEKKQKREPGT) are enriched in basic and acidic residues. Residues lysine 1259, lysine 1276, lysine 1283, and lysine 1286 each participate in a glycyl lysine isopeptide (Lys-Gly) (interchain with G-Cter in SUMO2) cross-link. 4 positions are modified to phosphoserine: serine 1295, serine 1297, serine 1299, and serine 1302. Threonine 1327 is subject to Phosphothreonine. Serine 1332 and serine 1337 each carry phosphoserine. Residue threonine 1343 is modified to Phosphothreonine. Phosphoserine occurs at positions 1351 and 1354. Over residues 1360-1371 (TSPKHTNKEPKP) the composition is skewed to basic and acidic residues. Residues lysine 1363, lysine 1367, and lysine 1373 each participate in a glycyl lysine isopeptide (Lys-Gly) (interchain with G-Cter in SUMO2) cross-link. 2 positions are modified to phosphoserine: serine 1374 and serine 1377. Residue lysine 1387 forms a Glycyl lysine isopeptide (Lys-Gly) (interchain with G-Cter in SUMO2) linkage. Phosphoserine occurs at positions 1393 and 1395. Residues 1409 to 1433 (KPVSKKNVTVKKTAAKSQSSTSTTG) show a composition bias toward low complexity. Lysine 1424 participates in a covalent cross-link: Glycyl lysine isopeptide (Lys-Gly) (interchain with G-Cter in SUMO2); alternate. Lysine 1424 carries the post-translational modification N6-acetyllysine; alternate. Residues 1435 to 1441 (KKRAAPK) are interaction with PLSCR1. Residues 1443-1455 (AKKDPDLDSDVSK) show a composition bias toward basic and acidic residues. Lysine 1444 participates in a covalent cross-link: Glycyl lysine isopeptide (Lys-Gly) (interchain with G-Cter in SUMO2); alternate. Lysine 1444 carries the post-translational modification N6-acetyllysine; alternate. At serine 1451 the chain carries Phosphoserine. Residues lysine 1456 and lysine 1461 each participate in a glycyl lysine isopeptide (Lys-Gly) (interchain with G-Cter in SUMO2) cross-link. Serine 1471 carries the phosphoserine modification. Phosphothreonine is present on threonine 1472. Serine 1473, serine 1476, and serine 1478 each carry phosphoserine. Glycyl lysine isopeptide (Lys-Gly) (interchain with G-Cter in SUMO2) cross-links involve residues lysine 1486 and lysine 1494. Basic and acidic residues predominate over residues 1493 to 1504 (PKGESDDFHLDL). Phosphoserine is present on residues serine 1497 and serine 1527.

This sequence belongs to the type II topoisomerase family. In terms of assembly, homodimer. Interacts with COPS5. Interacts with RECQL5; this stimulates DNA decatenation. Interacts with SETMAR; stimulates the topoisomerase activity. Interacts with DHX9; this interaction occurs in a E2 enzyme UBE2I- and RNA-dependent manner, negatively regulates DHX9-mediated double-stranded DNA and RNA duplex helicase activity and stimulates TOP2A-mediated supercoiled DNA relaxation activity. Interacts with HNRNPU (via C-terminus); this interaction protects the topoisomerase TOP2A from degradation and positively regulates the relaxation of supercoiled DNA in a RNA-dependent manner. Interacts with MCM3AP. Interacts with ERCC6. Interacts with PLSCR1. Interacts with GCNA; this interaction allows the resolution of topoisomerase II (TOP2A) DNA-protein cross-links. Interacts with POL1RA/RPA1 (via dock II) and UBTF in the context of Pol I complex; may assist Pol I transcription initiation by releasing supercoils occurring during DNA unwinding. Interacts with TPRN; TPRN interacts with a number of DNA damage response proteins, is recruited to sites of DNA damage and may play a role in DNA damage repair. Requires Mg(2+) as cofactor. The cofactor is Mn(2+). Ca(2+) is required as a cofactor. In terms of processing, phosphorylation has no effect on catalytic activity. However, phosphorylation at Ser-1106 by CSNK1D/CK1 promotes DNA cleavable complex formation.

It is found in the cytoplasm. The protein localises to the nucleus. It localises to the nucleoplasm. The protein resides in the nucleolus. The enzyme catalyses ATP-dependent breakage, passage and rejoining of double-stranded DNA.. Key decatenating enzyme that alters DNA topology by binding to two double-stranded DNA molecules, generating a double-stranded break in one of the strands, passing the intact strand through the broken strand, and religating the broken strand. May play a role in regulating the period length of BMAL1 transcriptional oscillation. This Sus scrofa (Pig) protein is DNA topoisomerase 2-alpha (TOP2A).